We begin with the raw amino-acid sequence, 496 residues long: Aspartic proteinase (496 aa).

A signal peptide spans 1–24 (MAKRHLLLVTTCLWALSCALLLHA). The propeptide at 25–59 (SSDGFLRVNLNKKRLDKEDLTAAKLAQQGNRLLKT) is activation peptide. The Peptidase A1 domain maps to 77–493 (YYGVIGLGSP…DFGKDRIGFA (417 aa)). Asp-95 is a catalytic residue. Disulfide bonds link Cys-108/Cys-114 and Cys-273/Cys-277. Asp-282 is a catalytic residue. The region spanning 307-407 (IISTECKEVV…NQLCERLPSP (101 aa)) is the Saposin B-type domain. 4 cysteine pairs are disulfide-bonded: Cys-312–Cys-401, Cys-337–Cys-373, Cys-343–Cys-370, and Cys-415–Cys-452. The N-linked (GlcNAc...) asparagine glycan is linked to Asn-387.

It belongs to the peptidase A1 family.

The protein resides in the vacuole. In terms of biological role, involved in the breakdown of propeptides of storage proteins in protein-storage vacuoles. The sequence is that of Aspartic proteinase (RAP) from Oryza sativa subsp. japonica (Rice).